A 594-amino-acid polypeptide reads, in one-letter code: Glutamate decarboxylase 1 (594 aa).

Residues 1–13 (MASSTPSSSATSS) show a composition bias toward low complexity. A disordered region spans residues 1-23 (MASSTPSSSATSSNAGADPNTTN). Phosphoserine is present on Ser78. Residue 190 to 192 (QLS) coordinates 4-aminobutanoate. Position 405 is an N6-(pyridoxal phosphate)lysine (Lys405). 4-aminobutanoate is bound at residue Arg567.

Belongs to the group II decarboxylase family. As to quaternary structure, homodimer. Pyridoxal 5'-phosphate serves as cofactor.

It carries out the reaction L-glutamate + H(+) = 4-aminobutanoate + CO2. Its function is as follows. Catalyzes the synthesis of the inhibitory neurotransmitter gamma-aminobutyric acid (GABA) with pyridoxal 5'-phosphate as cofactor. The chain is Glutamate decarboxylase 1 (GAD1) from Bos taurus (Bovine).